We begin with the raw amino-acid sequence, 25 residues long: M-poneritoxin-Na1b (25 aa).

The protein belongs to the non-disulfide-bridged peptide (NDBP) superfamily. Medium-length antimicrobial peptide (group 3) family. Ponericin-W subfamily. In terms of tissue distribution, expressed by the venom gland.

The protein resides in the secreted. It is found in the target cell membrane. Functionally, membrane-perturbating peptide with multiple activities. It is insecticidal, since it induces reversible paralysis in insects (L.cuprina) after 1 hour, but fails to kill flies. It shows a relatively strong and broad-spectrum antibacterial activity against both Gram-positive and Gram-negative bacteria (MIC&lt;20 uM). It is also anthelmintic, since it potently inhibits the larval development of the major pathogenic nematode of ruminants (H.contortus, IC(50)=2.8 uM). Interestingly, only at 10 uM, it increases adult males motility of the other nematode B.malayi for 24 hours post-treatment, followed by a reduction in motility for the rest of the experiment. It shows cytotoxic activity against HEK293 cells (EC(50)=4-6 uM) and induces hemolysis in human erythrocytes (EC(50)=40-62 uM). In addition, it causes an important increase in intracellular calcium concentration on neuronal and epithelial cell lines, which supports a non-specific membrane perturbation mechanism of action. In vivo, it induces pain by intraplantar injection into mice, suggesting a defensive function against vertebrate predators. The protein is M-poneritoxin-Na1b of Neoponera apicalis (Ant).